Here is a 396-residue protein sequence, read N- to C-terminus: 1-deoxy-D-xylulose 5-phosphate reductoisomerase (396 aa).

Positions 13, 14, 15, 16, and 127 each coordinate NADPH. Lys-128 provides a ligand contact to 1-deoxy-D-xylulose 5-phosphate. Glu-129 lines the NADPH pocket. A Mn(2+)-binding site is contributed by Asp-153. 1-deoxy-D-xylulose 5-phosphate is bound by residues Ser-154, Glu-155, Ser-184, and His-207. Glu-155 lines the Mn(2+) pocket. An NADPH-binding site is contributed by Gly-213. 4 residues coordinate 1-deoxy-D-xylulose 5-phosphate: Ser-220, Asn-225, Lys-226, and Glu-229. Mn(2+) is bound at residue Glu-229.

It belongs to the DXR family. It depends on Mg(2+) as a cofactor. Mn(2+) serves as cofactor.

It carries out the reaction 2-C-methyl-D-erythritol 4-phosphate + NADP(+) = 1-deoxy-D-xylulose 5-phosphate + NADPH + H(+). Its pathway is isoprenoid biosynthesis; isopentenyl diphosphate biosynthesis via DXP pathway; isopentenyl diphosphate from 1-deoxy-D-xylulose 5-phosphate: step 1/6. Functionally, catalyzes the NADPH-dependent rearrangement and reduction of 1-deoxy-D-xylulose-5-phosphate (DXP) to 2-C-methyl-D-erythritol 4-phosphate (MEP). This is 1-deoxy-D-xylulose 5-phosphate reductoisomerase from Stutzerimonas stutzeri (strain A1501) (Pseudomonas stutzeri).